The chain runs to 414 residues: Ribulose bisphosphate carboxylase large chain (414 aa).

Positions 100 and 150 each coordinate substrate. K152 functions as the Proton acceptor in the catalytic mechanism. Residue K154 participates in substrate binding. Mg(2+)-binding residues include K178, D180, and E181. At K178 the chain carries N6-carboxylysine. H271 (proton acceptor) is an active-site residue. The substrate site is built by R272, H304, and S356.

The protein belongs to the RuBisCO large chain family. Type I subfamily. As to quaternary structure, heterohexadecamer of 8 large chains and 8 small chains; disulfide-linked. The disulfide link is formed within the large subunit homodimers. Mg(2+) is required as a cofactor. The disulfide bond which can form in the large chain dimeric partners within the hexadecamer appears to be associated with oxidative stress and protein turnover.

Its subcellular location is the plastid. It is found in the chloroplast. It carries out the reaction 2 (2R)-3-phosphoglycerate + 2 H(+) = D-ribulose 1,5-bisphosphate + CO2 + H2O. The catalysed reaction is D-ribulose 1,5-bisphosphate + O2 = 2-phosphoglycolate + (2R)-3-phosphoglycerate + 2 H(+). RuBisCO catalyzes two reactions: the carboxylation of D-ribulose 1,5-bisphosphate, the primary event in carbon dioxide fixation, as well as the oxidative fragmentation of the pentose substrate in the photorespiration process. Both reactions occur simultaneously and in competition at the same active site. This chain is Ribulose bisphosphate carboxylase large chain (rbcL), found in Blechnopsis orientalis (Fish fern).